We begin with the raw amino-acid sequence, 299 residues long: HTH-type transcriptional regulator ArgP (299 aa).

The HTH lysR-type domain maps to leucine 4–threonine 60. The H-T-H motif DNA-binding region spans phenylalanine 21–lysine 40.

Belongs to the LysR transcriptional regulatory family. As to quaternary structure, homodimer.

In terms of biological role, controls the transcription of genes involved in arginine and lysine metabolism. This Aeromonas salmonicida protein is HTH-type transcriptional regulator ArgP.